The sequence spans 461 residues: MRWEFLPCLLLLISNNKIFGFKVPSINFEMLKDEGFEVSIPDEPGIQRVFYMFQIDDTCPALMDYITEAVNGSWVSKQKMSLQNNDKLQISMLVQFNEEIFEKSETRVIINTRLLTTKDSSSRGITFLTGEGECQAYLAPAQQAKRCKAAQTIVSNGRHTCQGELIFEDNFSEAQLNKTTWKHDIRQRMYHVEEELVAFDDAARNCFVKEGELHIVPTIATEVTDGSFKLGDRCTAVESPEQECNIAHGIFYSIKPPVFSAQIHTRNSFSFKFGKIVVRAKLPKGDWLFPYLMLQPVSTYAETHYAKQLRIAYARGNANLRTKQGDDISGNHLYGGGVVWHHGNAVQFLKDKISNSHYGDDFHNYTMIWQRDKITLMVDDEVYGELYDGLPFFNEKCFIIFGVTVGGFLNFDDSLLAKDVKPYKNREPRAALSFWQHRDAWAPTWGRHSAMVIDYVRVYAE.

The first 20 residues, 1–20, serve as a signal peptide directing secretion; sequence MRWEFLPCLLLLISNNKIFG. Positions 21–115 constitute a CBM39 domain; that stretch reads FKVPSINFEM…TRVIINTRLL (95 aa). Asn-71, Asn-170, Asn-177, and Asn-364 each carry an N-linked (GlcNAc...) asparagine glycan. Positions 179 to 461 constitute a GH16 domain; the sequence is TTWKHDIRQR…VIDYVRVYAE (283 aa).

Belongs to the insect beta-1,3-glucan binding protein family.

It localises to the secreted. Involved in the recognition of invading microorganisms. Binds specifically to beta-1,3-glucan and activates the phenoloxidase cascade. This is Gram-negative bacteria-binding protein 2 from Drosophila melanogaster (Fruit fly).